Here is a 370-residue protein sequence, read N- to C-terminus: Phospho-N-acetylmuramoyl-pentapeptide-transferase (370 aa).

The next 10 helical transmembrane spans lie at 29–49, 70–90, 93–113, 133–153, 177–197, 209–229, 251–271, 273–293, 298–318, and 349–369; these read AGLT…SFLL, GTPT…TLLW, LSNW…GLGF, KFIV…YYTG, GPVW…LIGS, GLAS…AYVS, VFLA…CHPA, VFMG…VAIM, ILLV…ILQV, and VIRF…TLKI.

It belongs to the glycosyltransferase 4 family. MraY subfamily. It depends on Mg(2+) as a cofactor.

The protein resides in the cell inner membrane. It carries out the reaction UDP-N-acetyl-alpha-D-muramoyl-L-alanyl-gamma-D-glutamyl-meso-2,6-diaminopimeloyl-D-alanyl-D-alanine + di-trans,octa-cis-undecaprenyl phosphate = di-trans,octa-cis-undecaprenyl diphospho-N-acetyl-alpha-D-muramoyl-L-alanyl-D-glutamyl-meso-2,6-diaminopimeloyl-D-alanyl-D-alanine + UMP. Its pathway is cell wall biogenesis; peptidoglycan biosynthesis. Catalyzes the initial step of the lipid cycle reactions in the biosynthesis of the cell wall peptidoglycan: transfers peptidoglycan precursor phospho-MurNAc-pentapeptide from UDP-MurNAc-pentapeptide onto the lipid carrier undecaprenyl phosphate, yielding undecaprenyl-pyrophosphoryl-MurNAc-pentapeptide, known as lipid I. This Leptospira biflexa serovar Patoc (strain Patoc 1 / Ames) protein is Phospho-N-acetylmuramoyl-pentapeptide-transferase.